Consider the following 362-residue polypeptide: MFLRLFKYLWPERYLPETPAQDPFDENPPPCGPGRVGVLLVNLGTPDEPTRGAIRRYLGEFLSDPRVIEIPRYLWMPILHGLVLTMRPKKLAPRYAGIWMEEGSPLLVYSQRQAAGVRQGLAARGVHAEVELAMRYGKPSIPAAITALRERGCDHILAVPLYPQYAASTTATVVDAVTRHAGRLRDQPALRFVKRFHNDPAYVEAQAGRIAEFWQAHGRPQKLVMSFHGLPRYSIELGDPYYRDCLDTARLLRERLGLREDEVEVTFQSRFGSARWLEPYTEPTLAELARQGVTEVDVVCPGFVADCLETLEEISQECRDAFVAAGGRQFRYIPALNDCPPWIEGLTDLVERQLRGWPTGNP.

Fe cation is bound by residues histidine 228 and glutamate 309.

The protein belongs to the ferrochelatase family.

It is found in the cytoplasm. The enzyme catalyses heme b + 2 H(+) = protoporphyrin IX + Fe(2+). Its pathway is porphyrin-containing compound metabolism; protoheme biosynthesis; protoheme from protoporphyrin-IX: step 1/1. Its function is as follows. Catalyzes the ferrous insertion into protoporphyrin IX. In Bordetella pertussis (strain Tohama I / ATCC BAA-589 / NCTC 13251), this protein is Ferrochelatase.